We begin with the raw amino-acid sequence, 65 residues long: Large ribosomal subunit protein uL29 (65 aa).

The protein belongs to the universal ribosomal protein uL29 family.

The protein is Large ribosomal subunit protein uL29 of Buchnera aphidicola subsp. Acyrthosiphon pisum (strain 5A).